The following is a 76-amino-acid chain: Glutathione S-transferase (76 aa).

The 40-residue stretch at 1–40 (XVAFETVPVDLMKGEHKQPAYLALQPFGTVPAVVDGDYXL) folds into the GST N-terminal domain. The GST C-terminal domain occupies 41 to 76 (LSAVLDVYEAHLHGYLAGDFVSLADLAHLPFTDYLV).

This sequence belongs to the GST superfamily. Theta family.

The protein resides in the cytoplasm. It catalyses the reaction RX + glutathione = an S-substituted glutathione + a halide anion + H(+). In terms of biological role, conjugation of reduced glutathione to a wide number of exogenous and endogenous hydrophobic electrophiles. The protein is Glutathione S-transferase of Brassica oleracea var. italica (Broccoli).